Reading from the N-terminus, the 427-residue chain is 12-alpha,13-alpha-dihydroxyfumitremorgin C prenyltransferase (427 aa).

Glutamate 94 is a binding site for substrate. Dimethylallyl diphosphate contacts are provided by arginine 105, lysine 192, tyrosine 194, tyrosine 268, glutamine 353, tyrosine 355, tyrosine 419, and tyrosine 423.

It belongs to the tryptophan dimethylallyltransferase family.

The enzyme catalyses 12alpha,13alpha-dihydroxyfumitremorgin C + dimethylallyl diphosphate = fumitremorgin B + diphosphate. The protein operates within mycotoxin biosynthesis. Functionally, 12-alpha,13-alpha-dihydroxyfumitremorgin C prenyltransferase; part of the gene cluster that mediates the biosynthesis of fumitremorgins, indole alkaloids that carry not only intriguing chemical structures, but also interesting biological and pharmacological activities. The biosynthesis of fumitremorgin-type alkaloids begins by condensation of the two amino acids L-tryptophan and L-proline to brevianamide F, catalyzed by the non-ribosomal peptide synthetase ftmA. Brevianamide F is then prenylated by the prenyltransferase ftmPT1/ftmB in the presence of dimethylallyl diphosphate, resulting in the formation of tryprostatin B. The three cytochrome P450 monooxygenases, ftmP450-1/ftmC, ftmP450-2/ftmE and ftmP450-3/FtmG, are responsible for the conversion of tryprostatin B to 6-hydroxytryprostatin B, tryprostatin A to fumitremorgin C and fumitremorgin C to 12,13-dihydroxyfumitremorgin C, respectively. The putative methyltransferase ftmMT/ftmD is expected for the conversion of 6-hydroxytryprostatin B to tryprostatin A. FtmPT2/FtmH catalyzes the prenylation of 12,13-dihydroxyfumitre-morgin C in the presence of dimethylallyl diphosphate, resulting in the formation of fumitremorgin B. Fumitremorgin B is further converted to verruculogen by ftmOx1/ftmF via the insertion of an endoperoxide bond between the two prenyl moieties. In some fungal species, verruculogen is further converted to fumitremorgin A, but the enzymes involved in this step have not been identified yet. This Aspergillus fumigatus (Neosartorya fumigata) protein is 12-alpha,13-alpha-dihydroxyfumitremorgin C prenyltransferase.